The chain runs to 1169 residues: Chromosome partition protein Smc (1169 aa).

32–39 (PNGSGKSN) lines the ATP pocket. A coiled-coil region spans residues 166–507 (DEISGIAEFD…RIKALKEMEE (342 aa)). The SMC hinge domain maps to 523-636 (PGIIDIVGNL…ENIDIAKELA (114 aa)). Residues 676 to 1030 (SKLNKIADEI…NKKKEVFMEV (355 aa)) are a coiled coil.

Belongs to the SMC family. As to quaternary structure, homodimer.

The protein resides in the cytoplasm. In terms of biological role, required for chromosome condensation and partitioning. The chain is Chromosome partition protein Smc from Methanocaldococcus jannaschii (strain ATCC 43067 / DSM 2661 / JAL-1 / JCM 10045 / NBRC 100440) (Methanococcus jannaschii).